The primary structure comprises 90 residues: Barrier-to-autointegration factor (90 aa).

Ser2 and Ser3 each carry phosphoserine. The residue at position 4 (Thr4) is a Phosphothreonine. Position 5 is a phosphoserine (Ser5).

This sequence belongs to the BAF family. Homodimer.

Its subcellular location is the nucleus. The protein localises to the chromosome. It localises to the nucleus envelope. The protein resides in the cytoplasm. In terms of biological role, non-specific DNA-binding protein that plays key roles in mitotic nuclear reassembly, chromatin organization, DNA damage response, gene expression and intrinsic immunity against foreign DNA. Contains two non-specific double-stranded DNA (dsDNA)-binding sites which promote DNA cross-bridging. Plays a key role in nuclear membrane reformation at the end of mitosis by driving formation of a single nucleus in a spindle-independent manner. Transiently cross-bridges anaphase chromosomes via its ability to bridge distant DNA sites, leading to the formation of a dense chromatin network at the chromosome ensemble surface that limits membranes to the surface. Also acts as a negative regulator of innate immune activation by restricting CGAS activity toward self-DNA upon acute loss of nuclear membrane integrity. Outcompetes CGAS for DNA-binding, thereby preventing CGAS activation and subsequent damaging autoinflammatory responses. Also involved in DNA damage response; acts by inhibiting the ADP-ribosyltransferase activity of PARP1. Involved in the recognition of exogenous dsDNA in the cytosol: associates with exogenous dsDNA immediately after its appearance in the cytosol at endosome breakdown and is required to avoid autophagy. This Danio rerio (Zebrafish) protein is Barrier-to-autointegration factor (banf1).